The following is a 508-amino-acid chain: MSNQTYRDSEYLDGLSGEELFNLQIGLTYRDFLVLPGFIDFHPSEVELETRLTRNIKLKRPFISSPMDTVTESQMAIAQALMGGIGIIHYNNTIEEQVALVEKVKRFENGFITDPVILGPKNVIRDLDAIKERKGFTGIPVTEDGTRNSKLIGIVTNRDIDFEKNREITLDKVMTTNLITGKEGITLQDANEIIKKSKIGKLPIVDSQGKLVSLVSRSDLKKNKEFPDASKDERKRLRCGAAVSTLLESRDRVAALYEAGVDVIIIDSAQGNSNYQIEMIQFIKKEFKNLDIVAGNVVTRAQAENLIRAGADGLRIGMGPGSICITQDTMAVGRAQATAIYQTAKHSAKYDVPVIADGGISNIGDIANSLAIGASTCMMGFMFAGTTEAPGEYFYENGIRLKKYRGMASIEAMKAGGDKRYFNEGQKVKVAQGVSGSVVDRGSILNFIPYLSQGLRLSFQDMGYKSIPEIHKALRDGKLRFERRSESAQAQGSVHGLYSFSAPTMRAE.

CBS domains are found at residues Phe111–Leu170 and Met174–Ser230. NAD(+)-binding positions include Asp267 and Gly317–Gly319. Residues Gly319 and Gly321 each coordinate K(+). Ser322 is a binding site for IMP. Cys324 lines the K(+) pocket. Catalysis depends on Cys324, which acts as the Thioimidate intermediate. Residues Asp357–Gly359, Gly380–Phe381, and Tyr404–Ala408 contribute to the IMP site. Arg420 (proton acceptor) is an active-site residue. IMP is bound at residue Gln432. Gly492 provides a ligand contact to K(+).

This sequence belongs to the IMPDH/GMPR family. Homotetramer. It depends on K(+) as a cofactor.

The enzyme catalyses IMP + NAD(+) + H2O = XMP + NADH + H(+). The protein operates within purine metabolism; XMP biosynthesis via de novo pathway; XMP from IMP: step 1/1. Mycophenolic acid (MPA) is a non-competitive inhibitor that prevents formation of the closed enzyme conformation by binding to the same site as the amobile flap. In contrast, mizoribine monophosphate (MZP) is a competitive inhibitor that induces the closed conformation. MPA is a potent inhibitor of mammalian IMPDHs but a poor inhibitor of the bacterial enzymes. MZP is a more potent inhibitor of bacterial IMPDH. Functionally, catalyzes the conversion of inosine 5'-phosphate (IMP) to xanthosine 5'-phosphate (XMP), the first committed and rate-limiting step in the de novo synthesis of guanine nucleotides, and therefore plays an important role in the regulation of cell growth. This chain is Inosine-5'-monophosphate dehydrogenase, found in Leptospira interrogans serogroup Icterohaemorrhagiae serovar Lai (strain 56601).